We begin with the raw amino-acid sequence, 1661 residues long: Pentafunctional AROM polypeptide (1661 aa).

A 3-dehydroquinate synthase region spans residues 1–388; it reads MATNGVKAEP…YEKKASSVVD (388 aa). NAD(+) contacts are provided by residues 50–52, 87–90, 118–120, and D123; these read DTN, ETSK, and GGV. A 7-phospho-2-dehydro-3-deoxy-D-arabino-heptonate-binding site is contributed by R134. 143–144 is a binding site for NAD(+); it reads TT. 7-phospho-2-dehydro-3-deoxy-D-arabino-heptonate contacts are provided by D150 and K156. K165 is an NAD(+) binding site. Residue N166 participates in 7-phospho-2-dehydro-3-deoxy-D-arabino-heptonate binding. NAD(+)-binding positions include 183 to 186 and N194; that span reads FLET. E198 is a binding site for Zn(2+). 7-phospho-2-dehydro-3-deoxy-D-arabino-heptonate-binding positions include 198 to 201 and K254; that span reads EVVK. Residue E264 is the Proton acceptor; for 3-dehydroquinate synthase activity of the active site. 7-phospho-2-dehydro-3-deoxy-D-arabino-heptonate contacts are provided by residues 268 to 272 and H275; that span reads RNLLN. H275 contributes to the Zn(2+) binding site. H279 acts as the Proton acceptor; for 3-dehydroquinate synthase activity in catalysis. Positions 291 and 360 each coordinate 7-phospho-2-dehydro-3-deoxy-D-arabino-heptonate. Residue H291 coordinates Zn(2+). An EPSP synthase region spans residues 401-850; it reads VHPGIPSDLN…WDILNQQFKA (450 aa). Residue C832 is the For EPSP synthase activity of the active site. Residues 872–1064 form a shikimate kinase region; the sequence is QKSIFIIGMR…KKKKQSFFVC (193 aa). 879–886 lines the ATP pocket; it reads GMRGAGKT. The segment at 1065 to 1285 is 3-dehydroquinase; that stretch reads LSAPNLEPCA…TAPGQLSAAD (221 aa). The active-site Proton acceptor; for 3-dehydroquinate dehydratase activity is H1188. K1216 acts as the Schiff-base intermediate with substrate; for 3-dehydroquinate dehydratase activity in catalysis. The interval 1298–1661 is shikimate dehydrogenase; the sequence is TKKFCIFGSP…LTYSWSLGDW (364 aa).

The protein in the N-terminal section; belongs to the sugar phosphate cyclases superfamily. Dehydroquinate synthase family. In the 2nd section; belongs to the EPSP synthase family. It in the 3rd section; belongs to the shikimate kinase family. This sequence in the 4th section; belongs to the type-I 3-dehydroquinase family. The protein in the C-terminal section; belongs to the shikimate dehydrogenase family. Homodimer. Requires Zn(2+) as cofactor.

The protein localises to the cytoplasm. The catalysed reaction is 7-phospho-2-dehydro-3-deoxy-D-arabino-heptonate = 3-dehydroquinate + phosphate. It catalyses the reaction 3-dehydroquinate = 3-dehydroshikimate + H2O. The enzyme catalyses shikimate + NADP(+) = 3-dehydroshikimate + NADPH + H(+). It carries out the reaction shikimate + ATP = 3-phosphoshikimate + ADP + H(+). The catalysed reaction is 3-phosphoshikimate + phosphoenolpyruvate = 5-O-(1-carboxyvinyl)-3-phosphoshikimate + phosphate. Its pathway is metabolic intermediate biosynthesis; chorismate biosynthesis; chorismate from D-erythrose 4-phosphate and phosphoenolpyruvate: step 2/7. It participates in metabolic intermediate biosynthesis; chorismate biosynthesis; chorismate from D-erythrose 4-phosphate and phosphoenolpyruvate: step 3/7. It functions in the pathway metabolic intermediate biosynthesis; chorismate biosynthesis; chorismate from D-erythrose 4-phosphate and phosphoenolpyruvate: step 4/7. The protein operates within metabolic intermediate biosynthesis; chorismate biosynthesis; chorismate from D-erythrose 4-phosphate and phosphoenolpyruvate: step 5/7. Its pathway is metabolic intermediate biosynthesis; chorismate biosynthesis; chorismate from D-erythrose 4-phosphate and phosphoenolpyruvate: step 6/7. Functionally, the AROM polypeptide catalyzes 5 consecutive enzymatic reactions in prechorismate polyaromatic amino acid biosynthesis. The polypeptide is Pentafunctional AROM polypeptide (Phaeosphaeria nodorum (strain SN15 / ATCC MYA-4574 / FGSC 10173) (Glume blotch fungus)).